Reading from the N-terminus, the 20-residue chain is FLAKKVAKKLVSHVAQKQLE.

Glu-20 is subject to Glutamic acid 1-amide.

In terms of tissue distribution, expressed by the venom gland.

The protein localises to the secreted. The chain is Short cationic peptide-4b from Cupiennius salei (American wandering spider).